The following is a 662-amino-acid chain: MDKKKLIEELVEELNKYAYEYYVLGNSSVTDKDYDKKYYELVDLEKETGYKLPYSPTQRVGDVILPEFKKYTHKARLWSLDKAQTLEEIREWHNRNVKFLEEYNRTSDEELPPLKYILTKKFDGLTINLSYDENGVLVTGATRGTGAIGEDVTAQVKTIKSIPLKIDCHDFLEIHGEAIMTTEAFEKYNSEAETPLKNLRNGAAGALRNLNVAETAKRNLSAFFYDVGYKEGAPFKTYMEMLNFIKTKGFPMDDYIRECTTLDEIQKEIDYIRDIRFDLNYDIDGLVIAIDDIRTRDLLGYTVKFPKWAIAYKFEAQEATTKLLDVEWNVGRSGRVSPTAILEPVELAGVTVKRATLNNMDDIARKGVRLGAEVFVRRSNDVIPEIMGVVPESLEGTKEIEEPKVCPACGAHLVHEGVHIYCENTLGCKPQMVKTIVHFAGREAMNIAGFSEKTAEQLFEKLDIRDISDLYKLEYEKLLDLDKFGPKKAQNLLDAIEKSKDCTLEAFLYSLGIPNVGVKTAKDLVKRFESLENLEKATFEELVSVQDVGDIVARSIIEFFKEERTLKVINELLSLGVNPHYEKKEVLESPFMGKTVVVTGTLENYSRTSIKEKLESLGAKVSGSVSKKTDFVIAGEAAGSKYDKAKSLGVTILSEEEFENMI.

NAD(+)-binding positions include 31-35 (DKDYD) and 79-80 (SL). Lysine 121 acts as the N6-AMP-lysine intermediate in catalysis. Arginine 143, glutamate 177, and lysine 313 together coordinate NAD(+). The Zn(2+) site is built by cysteine 406, cysteine 409, cysteine 422, and cysteine 428. Residues 586 to 662 (VLESPFMGKT…LSEEEFENMI (77 aa)) enclose the BRCT domain.

It belongs to the NAD-dependent DNA ligase family. LigA subfamily. Requires Mg(2+) as cofactor. Mn(2+) is required as a cofactor.

The catalysed reaction is NAD(+) + (deoxyribonucleotide)n-3'-hydroxyl + 5'-phospho-(deoxyribonucleotide)m = (deoxyribonucleotide)n+m + AMP + beta-nicotinamide D-nucleotide.. Functionally, DNA ligase that catalyzes the formation of phosphodiester linkages between 5'-phosphoryl and 3'-hydroxyl groups in double-stranded DNA using NAD as a coenzyme and as the energy source for the reaction. It is essential for DNA replication and repair of damaged DNA. This chain is DNA ligase, found in Clostridium perfringens (strain 13 / Type A).